The primary structure comprises 235 residues: Phosphoribosylaminoimidazole-succinocarboxamide synthase (235 aa).

This sequence belongs to the SAICAR synthetase family.

The catalysed reaction is 5-amino-1-(5-phospho-D-ribosyl)imidazole-4-carboxylate + L-aspartate + ATP = (2S)-2-[5-amino-1-(5-phospho-beta-D-ribosyl)imidazole-4-carboxamido]succinate + ADP + phosphate + 2 H(+). The protein operates within purine metabolism; IMP biosynthesis via de novo pathway; 5-amino-1-(5-phospho-D-ribosyl)imidazole-4-carboxamide from 5-amino-1-(5-phospho-D-ribosyl)imidazole-4-carboxylate: step 1/2. The protein is Phosphoribosylaminoimidazole-succinocarboxamide synthase of Chlorobaculum tepidum (strain ATCC 49652 / DSM 12025 / NBRC 103806 / TLS) (Chlorobium tepidum).